A 363-amino-acid chain; its full sequence is Large ribosomal subunit protein uL4B (363 aa).

The interval P280–N363 is C-terminal-extended nuclear localization signal.

It belongs to the universal ribosomal protein uL4 family. In terms of assembly, component of the large ribosomal subunit (LSU). Mature yeast ribosomes consist of a small (40S) and a large (60S) subunit. The 40S small subunit contains 1 molecule of ribosomal RNA (18S rRNA) and at least 33 different proteins. The large 60S subunit contains 3 rRNA molecules (25S, 5.8S and 5S rRNA) and at least 46 different proteins. uL4 is associated with the polypeptide exit tunnel. uL4 interacts with its chaperone ACL4 and the nuclear import receptor KAP104.

The protein localises to the cytoplasm. Component of the ribosome, a large ribonucleoprotein complex responsible for the synthesis of proteins in the cell. The small ribosomal subunit (SSU) binds messenger RNAs (mRNAs) and translates the encoded message by selecting cognate aminoacyl-transfer RNA (tRNA) molecules. The large subunit (LSU) contains the ribosomal catalytic site termed the peptidyl transferase center (PTC), which catalyzes the formation of peptide bonds, thereby polymerizing the amino acids delivered by tRNAs into a polypeptide chain. The nascent polypeptides leave the ribosome through a tunnel in the LSU and interact with protein factors that function in enzymatic processing, targeting, and the membrane insertion of nascent chains at the exit of the ribosomal tunnel. The polypeptide is Large ribosomal subunit protein uL4B (rpl401) (Schizosaccharomyces pombe (strain 972 / ATCC 24843) (Fission yeast)).